The primary structure comprises 270 residues: Replication protein A 32 kDa subunit (270 aa).

The residue at position 1 (Met-1) is an N-acetylmethionine. A phosphoserine; by PRKDC mark is found at Ser-4 and Ser-8. Residues 20 to 41 form a disordered region; sequence YTQSPGGFGSPTPSQAEKKSRV. Thr-21 is subject to Phosphothreonine; by PRKDC. Position 23 is a phosphoserine; by CDK2 (Ser-23). Ser-29 carries the phosphoserine; by CDK1 modification. Ser-33 is subject to Phosphoserine; by PRKDC. Glycyl lysine isopeptide (Lys-Gly) (interchain with G-Cter in ubiquitin) cross-links involve residues Lys-37 and Lys-38. The OB DNA-binding region spans 74–148; that stretch reads VTIVGIIRHA…KSLVAFKIIP (75 aa). The tract at residues 171–192 is disordered; it reads KPNSQASAGRPSMSNPGMSEPG. The interaction with RAD52, TIPIN, UNG and XPA stretch occupies residues 187 to 270; that stretch reads GMSEPGNFSG…DDHFKSTDAE (84 aa).

Belongs to the replication factor A protein 2 family. In terms of assembly, component of the replication protein A complex (RPA/RP-A), a heterotrimeric complex composed of RPA1, RPA2 and RPA3. Interacts with PRPF19; the PRP19-CDC5L complex is recruited to the sites of DNA repair where it ubiquitinates the replication protein A complex (RPA). Interacts with SERTAD3. Interacts with TIPIN. Interacts with TIMELESS. Interacts with PPP4R2; the interaction is direct, DNA damage-dependent and mediates the recruitment of the PP4 catalytic subunit PPP4C. Interacts (hyperphosphorylated) with RAD51. Interacts with SMARCAL1; the interaction is direct and mediates the recruitment to the RPA complex of SMARCAL1. Interacts with RAD52 and XPA; those interactions are direct and associate RAD52 and XPA to the RPA complex. Interacts with FBH1. Interacts with ETAA1; the interaction is direct and promotes ETAA1 recruitment at stalled replication forks. Interacts with DDI2. Interacts (in unphosphorylated form via N-terminus) with EIF4EBP3; the interaction enhances EIF4EBP3-mediated inhibition of EIF4E-mediated mRNA nuclear export. Interacts with nuclear UNG (isoform 2); this interaction mediates UNG recruitment to RPA-coated single-stranded DNA at stalled replication forks. In terms of processing, differentially phosphorylated throughout the cell cycle, becoming phosphorylated at the G1-S transition and dephosphorylated in late mitosis. Mainly phosphorylated at Ser-23 and Ser-29, by cyclin A-CDK2 and cyclin B-CDK1, respectively during DNA replication and mitosis. Dephosphorylation may require the serine/threonine-protein phosphatase 4. Phosphorylation at Ser-23 and Ser-29 is a prerequisite for further phosphorylation. Becomes hyperphosphorylated on additional residues including Ser-4, Ser-8, Thr-21 and Ser-33 in response to DNA damage. Hyperphosphorylation is mediated by ATM, ATR and PRKDC. Primarily recruited to DNA repair nuclear foci as a hypophosphorylated form it undergoes subsequent hyperphosphorylation, catalyzed by ATR. Hyperphosphorylation is required for RAD51 recruitment to chromatin and efficient DNA repair. Phosphorylation at Thr-21 depends upon RFWD3 presence. Post-translationally, DNA damage-induced 'Lys-63'-linked polyubiquitination by PRPF19 mediates ATRIP recruitment to the RPA complex at sites of DNA damage and activation of ATR. Ubiquitinated by RFWD3 at stalled replication forks in response to DNA damage: ubiquitination by RFWD3 does not lead to degradation by the proteasome and promotes removal of the RPA complex from stalled replication forks, promoting homologous recombination.

It localises to the nucleus. Its subcellular location is the PML body. Its function is as follows. As part of the heterotrimeric replication protein A complex (RPA/RP-A), binds and stabilizes single-stranded DNA intermediates, that form during DNA replication or upon DNA stress. It prevents their reannealing and in parallel, recruits and activates different proteins and complexes involved in DNA metabolism. Thereby, it plays an essential role both in DNA replication and the cellular response to DNA damage. In the cellular response to DNA damage, the RPA complex controls DNA repair and DNA damage checkpoint activation. Through recruitment of ATRIP activates the ATR kinase a master regulator of the DNA damage response. It is required for the recruitment of the DNA double-strand break repair factors RAD51 and RAD52 to chromatin in response to DNA damage. Also recruits to sites of DNA damage proteins like XPA and XPG that are involved in nucleotide excision repair and is required for this mechanism of DNA repair. Also plays a role in base excision repair (BER) probably through interaction with UNG. Also recruits SMARCAL1/HARP, which is involved in replication fork restart, to sites of DNA damage. May also play a role in telomere maintenance. The sequence is that of Replication protein A 32 kDa subunit from Mus musculus (Mouse).